We begin with the raw amino-acid sequence, 500 residues long: Cytochrome P450 71B26 (500 aa).

A helical membrane pass occupies residues 1–21 (MDSIWILSLLFFIIFLLLAAF). Cys440 serves as a coordination point for heme.

The protein belongs to the cytochrome P450 family. Heme serves as cofactor.

Its subcellular location is the membrane. The protein is Cytochrome P450 71B26 (CYP71B26) of Arabidopsis thaliana (Mouse-ear cress).